A 290-amino-acid chain; its full sequence is Shikimate dehydrogenase (NADP(+)) (290 aa).

Residues 20–22 (SLS) and T67 contribute to the shikimate site. K71 serves as the catalytic Proton acceptor. N92 and D107 together coordinate shikimate. Residues 132 to 136 (GAGGA) and M228 contribute to the NADP(+) site. Y230 is a binding site for shikimate. Residue G251 coordinates NADP(+).

The protein belongs to the shikimate dehydrogenase family. As to quaternary structure, homodimer.

The enzyme catalyses shikimate + NADP(+) = 3-dehydroshikimate + NADPH + H(+). Its pathway is metabolic intermediate biosynthesis; chorismate biosynthesis; chorismate from D-erythrose 4-phosphate and phosphoenolpyruvate: step 4/7. In terms of biological role, involved in the biosynthesis of the chorismate, which leads to the biosynthesis of aromatic amino acids. Catalyzes the reversible NADPH linked reduction of 3-dehydroshikimate (DHSA) to yield shikimate (SA). This is Shikimate dehydrogenase (NADP(+)) from Citrifermentans bemidjiense (strain ATCC BAA-1014 / DSM 16622 / JCM 12645 / Bem) (Geobacter bemidjiensis).